The following is a 325-amino-acid chain: MRILGIETSCDETGVAIYDEDKGLVANQLYSQIDMHADYGGVVPELASRDHIRKTLPLIQEALKEANLQPSDIDGIAYTAGPGLVGALLVGSTIARSLAYAWNVPALGVHHMEGHLLAPMLEENAPEFPFVALLISGGHTQLVKVDGVGQYELLGESIDDAAGEAFDKTGKLLGLDYPAGVAMSKLAESGTPNRFKFPRPMTDRPGLDFSFSGLKTFAANTIKANLNENGELDEQTKCDIAHAFQQAVVDTILIKCKRALEQTGYKRLVMAGGVSANKQLRADLAEMMKKLKGEVFYPRPQFCTDNGAMIAYTGFLRLKTMNKPT.

Residues His111 and His115 each coordinate Fe cation. Substrate contacts are provided by residues 134–138 (LISGG), Asp167, Gly180, and Asn277. Asp305 is a binding site for Fe cation.

This sequence belongs to the KAE1 / TsaD family. It depends on Fe(2+) as a cofactor.

The protein localises to the cytoplasm. It is found in the secreted. It catalyses the reaction L-threonylcarbamoyladenylate + adenosine(37) in tRNA = N(6)-L-threonylcarbamoyladenosine(37) in tRNA + AMP + H(+). Its function is as follows. Required for the formation of a threonylcarbamoyl group on adenosine at position 37 (t(6)A37) in tRNAs that read codons beginning with adenine. Is involved in the transfer of the threonylcarbamoyl moiety of threonylcarbamoyl-AMP (TC-AMP) to the N6 group of A37, together with TsaE and TsaB. TsaD likely plays a direct catalytic role in this reaction. The sequence is that of tRNA N6-adenosine threonylcarbamoyltransferase from Mannheimia haemolytica (Pasteurella haemolytica).